The primary structure comprises 478 residues: Sialidase-4 (478 aa).

The short motif at 22 to 25 (YRVP) is the FRIP motif element. Positions 23 and 43 each coordinate substrate. Catalysis depends on proton acceptor residues D47 and D48. The stretch at 127-138 (VTSCDAGLTWGS) is one BNR 1 repeat. The substrate site is built by Y177 and Y179. Residues 200-211 (FYSDDHGISWHC) form a BNR 2 repeat. Positions 222 and 238 each coordinate substrate. Residues 247 to 258 (ALSADEGTSFLP) form a BNR 3 repeat. Disordered stretches follow at residues 285–307 (IEPQDDRWTGSPRNTPHSPCFNL) and 335–359 (SRSPENHGLEPGSDGDKTSWTPECP). R383 contributes to the substrate binding site. Y413 serves as the catalytic Nucleophile. Residue E434 is part of the active site.

The protein belongs to the glycosyl hydrolase 33 family. In terms of tissue distribution, highly expressed in brain, particularly in hippocampus, and at lower levels in liver and spleen. Expressed in hippocampal neurons (at protein level).

Its subcellular location is the cell membrane. The protein localises to the endoplasmic reticulum membrane. The protein resides in the microsome membrane. It localises to the mitochondrion inner membrane. It is found in the mitochondrion outer membrane. Its subcellular location is the cell projection. The protein localises to the neuron projection. The protein resides in the lysosome lumen. It carries out the reaction Hydrolysis of alpha-(2-&gt;3)-, alpha-(2-&gt;6)-, alpha-(2-&gt;8)- glycosidic linkages of terminal sialic acid residues in oligosaccharides, glycoproteins, glycolipids, colominic acid and synthetic substrates.. The enzyme catalyses a ganglioside GM3 + H2O = a beta-D-galactosyl-(1-&gt;4)-beta-D-glucosyl-(1&lt;-&gt;1)-ceramide + N-acetylneuraminate. It catalyses the reaction a ganglioside GM3 (d18:1(4E)) + H2O = a beta-D-Gal-(1-&gt;4)-beta-D-Glc-(1&lt;-&gt;1)-Cer(d18:1(4E)) + N-acetylneuraminate. The catalysed reaction is a ganglioside GM2 + H2O = a ganglioside GA2 + N-acetylneuraminate. It carries out the reaction a ganglioside GM2 (d18:1(4E)) + H2O = a ganglioside GA2 (d18:1(4E)) + N-acetylneuraminate. The enzyme catalyses a ganglioside GD1a + H2O = a ganglioside GM1 + N-acetylneuraminate. It catalyses the reaction a ganglioside GD1a (d18:1(4E)) + H2O = a ganglioside GM1 (d18:1(4E)) + N-acetylneuraminate. The catalysed reaction is a ganglioside GD3 + H2O = a ganglioside GM3 + N-acetylneuraminate. It carries out the reaction a ganglioside GD3 (d18:1(4E)) + H2O = a ganglioside GM3 (d18:1(4E)) + N-acetylneuraminate. Functionally, exo-alpha-sialidase that catalyzes the hydrolytic cleavage of the terminal sialic acid (N-acetylneuraminic acid, Neu5Ac) of a glycan moiety in the catabolism of glycolipids, glycoproteins and oligosacharides. Efficiently hydrolyzes gangliosides including alpha-(2-&gt;3)-sialylated GD1a and GM3 and alpha-(2-&gt;8)-sialylated GD3. Hydrolyzes poly-alpha-(2-&gt;8)-sialylated neural cell adhesion molecule NCAM1 likely at growth cones, suppressing neurite outgrowth in hippocampal neurons. May desialylate sialyl Lewis A and X antigens at the cell surface, down-regulating these glycan epitopes recognized by SELE/E selectin in the initiation of cell adhesion and extravasation. Has sialidase activity toward mucin, fetuin and sialyllactose. This Mus musculus (Mouse) protein is Sialidase-4 (Neu4).